Consider the following 457-residue polypeptide: Multidrug resistance protein MdtK (457 aa).

Helical transmembrane passes span 11–31, 53–73, 93–113, 127–147, 159–179, 190–210, 249–269, 276–296, 313–333, 357–377, 387–407, and 417–437; these read LSAL…MGVV, IWLP…PVVA, FLAA…EYAI, AIGY…YQVL, PGMM…YIFI, GVGC…LMML, LLFE…LGVV, IALN…VATT, IAAH…AIFT, LMLL…GTGV, IFYI…YLLA, and GPAG…VMMV.

This sequence belongs to the multi antimicrobial extrusion (MATE) (TC 2.A.66.1) family. MdtK subfamily.

It localises to the cell inner membrane. In terms of biological role, multidrug efflux pump that functions probably as a Na(+)/drug antiporter. In Pectobacterium atrosepticum (strain SCRI 1043 / ATCC BAA-672) (Erwinia carotovora subsp. atroseptica), this protein is Multidrug resistance protein MdtK.